We begin with the raw amino-acid sequence, 269 residues long: MASANTRRVGDGAGGAFQPYLDSLRQELQQRDPTLLSVAVAVLAVLLTLVFWKFIWSRKSSQRAVLFVGLCDSGKTLLFVRLLTGQYRDTQTSITDSSAIYKVNNNRGNSLTLIDLPGHESLRLQFLDRFKSSARAVVFVVDSATFQREVKDVAEFLYQVLIDSMALKNTPAFLVACNKQDIAMAKSAKLIQQQLEKELNTLRVTRSAAPSTLDSSSTAPAQLGKKGKEFEFSQLPLKVEFLECSAKGGRGDAGSADVQDLEKWLAKIA.

The chain crosses the membrane as a helical span at residues 35–55; the sequence is LLSVAVAVLAVLLTLVFWKFI. GTP-binding positions include 69–77 and 90–93; these read GLCDSGKTL and TQTS. A Phosphoserine modification is found at Ser-110. Gly-118 lines the GTP pocket. Thr-212 is modified (phosphothreonine). Ala-246 contributes to the GTP binding site.

The protein belongs to the SRP receptor beta subunit family. As to quaternary structure, heterodimer with SRPRA.

Its subcellular location is the endoplasmic reticulum membrane. Its function is as follows. Component of the signal recognition particle (SRP) complex receptor (SR). Ensures, in conjunction with the SRP complex, the correct targeting of the nascent secretory proteins to the endoplasmic reticulum membrane system. May mediate the membrane association of SR. The chain is Signal recognition particle receptor subunit beta (Srprb) from Rattus norvegicus (Rat).